The sequence spans 624 residues: MALWGGRFTQAADTRFKDFNDSLRFDYRLAEQDIVGSIAWSKALLSVNVLSKEEQQKLEFALNELKLEVMEDPHQILHSDAEDIHSWVEQQLIGKVGDLGKKLHTGRSRNDQVATDLKLWCRQQGHQLLLGLDKLQTQMVNVAKQHQATVLPGYTHLQRAQPVTFAHWCLAYVEMFERDYSRLSDALTRLDTCPLGSGALAGTAYPIDREQLAQDLGFRRATRNSLDSVSDRDHVMELMSVASISMLHLSRLAEDMIFYNSGESGFIELADTVTSGSSLMPQKKNPDALELIRGKTGRVYGSLAGMMMTVKALPLAYNKDMQEDKEGLFDALDTWNDCMEMAALCFDGIKVNGERTLEAAKQGYANSTELADYLVAKGIPFREAHHIVGVAVVGAIAQGCALEELSLEQLQSFSPVIEADVYQILTIESCLEKRSALGGVSPKQVAYAVEQADKRLAARDTTLVKVRPARITDIETLESMVAYWANLGENLPRTRSEIIRDIGLFAVSEHQGLVTGCASLYIYDSGLAEIRSLGIEAGWQRQGQGTAVVQYLIDKAKDMAIKKLFVLTRAPEFFLKQNFVQTSKSLLPEKVLKDCDQCPRQHACDEVALEFNLSEQIISQVKVA.

Positions 1-466 (MALWGGRFTQ…AARDTTLVKV (466 aa)) are argininosuccinate lyase. The 151-residue stretch at 464–614 (VKVRPARITD…DEVALEFNLS (151 aa)) folds into the N-acetyltransferase domain. The interval 467 to 624 (RPARITDIET…EQIISQVKVA (158 aa)) is probable acetyltransferase.

This sequence in the N-terminal section; belongs to the lyase 1 family. Argininosuccinate lyase subfamily.

It is found in the cytoplasm. It carries out the reaction 2-(N(omega)-L-arginino)succinate = fumarate + L-arginine. It functions in the pathway amino-acid biosynthesis; L-arginine biosynthesis; L-arginine from L-ornithine and carbamoyl phosphate: step 3/3. The sequence is that of Bifunctional protein ArgH (argH) from Vibrio vulnificus (strain CMCP6).